A 1476-amino-acid chain; its full sequence is Copper-transporting ATPase 1 (1476 aa).

Residues 1–642 are Cytoplasmic-facing; it reads MEPSMDVNSV…HKREIKQWRS (642 aa). HMA domains follow at residues 8-74 and 85-151; these read NSVT…FDAL and TDTL…LETG. Cu(+) contacts are provided by Thr18, Cys19, and Cys22. Thr152 carries the phosphothreonine modification. HMA domains lie at 171–237 and 276–342; these read VVLK…FPAF and STAT…PGQY. Cys182, Cys185, Cys287, and Cys290 together coordinate Cu(+). Thr326 carries the post-translational modification Phosphothreonine. Phosphoserine occurs at positions 338, 352, 356, and 361. HMA domains are found at residues 376–442, 478–544, and 554–620; these read QETV…FDAV, SKCY…FGAT, and GILK…FEAS. Residues Cys387, Cys390, Cys489, Cys492, Cys565, and Cys568 each contribute to the Cu(+) site. A helical transmembrane segment spans residues 643 to 665; the sequence is SFLVSLFFCTPVMGLMMYMMAME. Asn674 and Asn685 each carry an N-linked (GlcNAc...) asparagine glycan. The next 3 membrane-spanning stretches (helical) occupy residues 695–717, 736–760, and 770–788; these read ILPGLSIMNLLSLLLCLPVQFFG, MDVLIVLATTIAFAYSLIILLVAMY, and SFDTPPMLFVFIALGRWLE. The N-linked (GlcNAc...) asparagine glycan is linked to Asn887. Residues 930–952 traverse the membrane as a helical segment; sequence YFVPFIVLVSIATLLVWIIIGFQ. Asn953 is a glycosylation site (N-linked (GlcNAc...) asparagine). The chain crosses the membrane as a helical span at residues 978–998; that stretch reads AFQASITVLCIACPCSLGLAT. Asp1034 functions as the 4-aspartylphosphate intermediate in the catalytic mechanism. Asn1130 and Asn1134 each carry an N-linked (GlcNAc...) asparagine glycan. The next 2 helical transmembrane spans lie at 1347–1373 and 1379–1397; these read INFLFPLIYNLVGIPIAAGVFLPIGLV and GSAAMAASSVSVVLSSLFL. Ser1420 and Ser1422 each carry phosphoserine. Asn1448 is a glycosylation site (N-linked (GlcNAc...) asparagine). 7 positions are modified to phosphoserine: Ser1450, Ser1453, Ser1456, Ser1459, Ser1463, Ser1466, and Ser1476.

The protein belongs to the cation transport ATPase (P-type) (TC 3.A.3) family. In terms of assembly, monomer. Interacts with PDZD11. Interacts with ATOX1 and COMMD1. Interacts with TYRP1. Directly interacts with SOD3; this interaction is copper-dependent and is required for SOD3 activity. As to expression, expressed in most tissues except liver.

The protein localises to the golgi apparatus. It is found in the trans-Golgi network membrane. It localises to the cell membrane. The enzyme catalyses Cu(+)(in) + ATP + H2O = Cu(+)(out) + ADP + phosphate + H(+). May function in the export of copper from the cytoplasm to an intracellular organelle. It may serve as well for the export of other metals. The chain is Copper-transporting ATPase 1 (ATP7A) from Cricetulus griseus (Chinese hamster).